The sequence spans 111 residues: Cytochrome c (111 aa).

An N-acetylalanine modification is found at A1. Positions 22, 25, and 26 each coordinate heme c. Position 80 is an N6,N6,N6-trimethyllysine (K80). M88 serves as a coordination point for heme c. N6,N6,N6-trimethyllysine is present on K94.

This sequence belongs to the cytochrome c family. Post-translationally, binds 1 heme c group covalently per subunit.

It localises to the mitochondrion intermembrane space. Electron carrier protein. The oxidized form of the cytochrome c heme group can accept an electron from the heme group of the cytochrome c1 subunit of cytochrome reductase. Cytochrome c then transfers this electron to the cytochrome oxidase complex, the final protein carrier in the mitochondrial electron-transport chain. This chain is Cytochrome c, found in Gossypium barbadense (Sea Island cotton).